Consider the following 119-residue polypeptide: Phosphoribosyl-AMP cyclohydrolase (119 aa).

Position 77 (Asp77) interacts with Mg(2+). Cys78 is a binding site for Zn(2+). Residues Asp79 and Asp81 each coordinate Mg(2+). Residues Cys94 and Cys101 each coordinate Zn(2+).

The protein belongs to the PRA-CH family. Homodimer. The cofactor is Mg(2+). It depends on Zn(2+) as a cofactor.

It localises to the cytoplasm. The catalysed reaction is 1-(5-phospho-beta-D-ribosyl)-5'-AMP + H2O = 1-(5-phospho-beta-D-ribosyl)-5-[(5-phospho-beta-D-ribosylamino)methylideneamino]imidazole-4-carboxamide. It participates in amino-acid biosynthesis; L-histidine biosynthesis; L-histidine from 5-phospho-alpha-D-ribose 1-diphosphate: step 3/9. Its function is as follows. Catalyzes the hydrolysis of the adenine ring of phosphoribosyl-AMP. The protein is Phosphoribosyl-AMP cyclohydrolase of Cereibacter sphaeroides (strain ATCC 17029 / ATH 2.4.9) (Rhodobacter sphaeroides).